The following is a 302-amino-acid chain: Taste receptor type 2 member 104 (302 aa).

The Extracellular portion of the chain corresponds to 1–7 (MLSMLES). The helical transmembrane segment at 8–28 (ILLSVATSEAMLGILGNIFIV) threads the bilayer. The Cytoplasmic portion of the chain corresponds to 29–43 (LVNCTNWVRNKKLSK). Residues 44-64 (INFILTGLAISRVFTIWIITL) form a helical membrane-spanning segment. The Extracellular portion of the chain corresponds to 65–87 (DAYTKVFFLTTLMPSNLHECISY). The helical transmembrane segment at 88 to 108 (IWVIINHLSVWFATSLSIFYF) threads the bilayer. The Cytoplasmic segment spans residues 109 to 128 (LKIANFSHYIFLWLKRRADK). A helical transmembrane segment spans residues 129 to 149 (VFVFLIGYLIITWLASFPLAV). The Extracellular portion of the chain corresponds to 150–182 (TVIKNIKVHHNNTSWLIQLEKRELLINYVFANM). N160 and N161 each carry an N-linked (GlcNAc...) asparagine glycan. The helical transmembrane segment at 183 to 203 (GPISLFMVAVFTCFLLTISLW) threads the bilayer. The Cytoplasmic portion of the chain corresponds to 204–233 (RHRRRMQSTGSKFRDLNTEVHVKAMKVLIS). A helical transmembrane segment spans residues 234–254 (FIILFILYFMGVLIETLCLFL). Residues 255–257 (TEN) lie on the Extracellular side of the membrane. A helical transmembrane segment spans residues 258 to 278 (ILLFIFGFTLSSTYPCCHSFI). The Cytoplasmic segment spans residues 279 to 302 (LILTSRELKQASMRALQRLKCCET).

Belongs to the G-protein coupled receptor T2R family.

The protein localises to the membrane. Its function is as follows. Putative taste receptor which may play a role in the perception of bitterness. The sequence is that of Taste receptor type 2 member 104 from Rattus norvegicus (Rat).